The following is a 301-amino-acid chain: Phomoidride biosynthesis cluster protein F (301 aa).

Its function is as follows. Part of the gene cluster that mediates the biosynthesis of the antihypercholesterolemic agents phomoidrides which are dimeric anhydrides. The function of phiF within the pathway has still to be determined. The pathway begins with the highly reducing polyketide synthase phiA that catalyzes the formation of a C12-fatty acyl-ACP, starting from one acetate and 5 malonate units. The hydrolase phiM is involved in the release of the C12-fatty acyl chain from phiA. The alkylcitrate synthase (ACS) phiJ and the alkylcitrate dehydratase (ACDH) phiI then give rise to decarboxylated monomeric anhydrides by coupling the C12-fatty acyl chain with oxalacetic acid. The cyclase phiC is responsible for the dimerization of the monomeric anhydrides which leads to the production of prephomoidride that contains the characteristic bicyclo[4.3.1]deca-1,6-diene system of phomoidrides. Iterative oxidation catalyzed by the alpha-ketoglutarate-dependent dioxygenase phiK produced then phomoidride A. Finally, the methyltransferase phiE converts phomoidride A to phomoidride B via an acetalization reaction. The phosphatidylethanolamine-binding protein phiB and phiN are not essential for dimerization and their functions have still to be determined. The polypeptide is Phomoidride biosynthesis cluster protein F (Fungal sp. (strain ATCC 74256)).